Consider the following 792-residue polypeptide: Lon protease (792 aa).

Residues 16–208 (LPILPLRETV…KVTYYLTREL (193 aa)) form the Lon N-terminal domain. 360–367 (GPPGVGKT) contacts ATP. The Lon proteolytic domain occupies 597-778 (KDEVGVATGL…DEVLNLALLE (182 aa)). Active-site residues include Ser684 and Lys727.

This sequence belongs to the peptidase S16 family. Homohexamer. Organized in a ring with a central cavity.

Its subcellular location is the cytoplasm. It carries out the reaction Hydrolysis of proteins in presence of ATP.. Functionally, ATP-dependent serine protease that mediates the selective degradation of mutant and abnormal proteins as well as certain short-lived regulatory proteins. Required for cellular homeostasis and for survival from DNA damage and developmental changes induced by stress. Degrades polypeptides processively to yield small peptide fragments that are 5 to 10 amino acids long. Binds to DNA in a double-stranded, site-specific manner. This is Lon protease from Dictyoglomus thermophilum (strain ATCC 35947 / DSM 3960 / H-6-12).